Consider the following 145-residue polypeptide: 3-hydroxyacyl-[acyl-carrier-protein] dehydratase FabZ (145 aa).

The active site involves histidine 51.

Belongs to the thioester dehydratase family. FabZ subfamily.

Its subcellular location is the cytoplasm. The catalysed reaction is a (3R)-hydroxyacyl-[ACP] = a (2E)-enoyl-[ACP] + H2O. Involved in unsaturated fatty acids biosynthesis. Catalyzes the dehydration of short chain beta-hydroxyacyl-ACPs and long chain saturated and unsaturated beta-hydroxyacyl-ACPs. The polypeptide is 3-hydroxyacyl-[acyl-carrier-protein] dehydratase FabZ (Staphylococcus haemolyticus (strain JCSC1435)).